Reading from the N-terminus, the 129-residue chain is UPF0102 protein RD1_1191 (129 aa).

Belongs to the UPF0102 family.

In Roseobacter denitrificans (strain ATCC 33942 / OCh 114) (Erythrobacter sp. (strain OCh 114)), this protein is UPF0102 protein RD1_1191.